Reading from the N-terminus, the 51-residue chain is Large ribosomal subunit protein eL39 (51 aa).

Belongs to the eukaryotic ribosomal protein eL39 family.

In Plutella xylostella (Diamondback moth), this protein is Large ribosomal subunit protein eL39 (RpL39).